The sequence spans 1804 residues: Collagen alpha-1(XI) chain (1804 aa).

An N-terminal signal peptide occupies residues 1–34 (MEPWSRWKTKRWIWDLTISTLALTFLFQAREVRG). Positions 35–511 (AAPVDILKAL…SKGPTISAQE (477 aa)) are cleaved as a propeptide — N-terminal propeptide. Intrachain disulfides connect C60–C242 and C181–C235. A Laminin G-like domain is found at 70-242 (DVAYRVTEEA…DYCDHYSPDC (173 aa)). A nonhelical region region spans residues 229-417 (KAAYDYCDHY…DFTETSINGH (189 aa)). Positions 315-329 (YQTETPRRVSGSNEP) are enriched in polar residues. 2 disordered regions span residues 315-334 (YQTE…PVEE) and 433-506 (EPGM…KGPT). Positions 418–506 (GAYGEKGQKG…YGGDGSKGPT (89 aa)) are triple-helical region (interrupted). The 49-residue stretch at 440 to 488 (GPPGPAGPAGLMGPPGLQGPSGLPGDPGDRGPPGRPGLPGADGLPGPPG) folds into the Collagen-like 1 domain. Low complexity-rich tracts occupy residues 447–465 (PAGL…LPGD) and 477–494 (LPGA…LMLP). Positions 507 to 509 (ISA) are short nonhelical segment. Residues 510 to 527 (QEAQAQAILQQARIALRG) form a telopeptide region. Residues 526 to 1567 (RGPPGPMGLT…SIQGDAGDNI (1042 aa)) are disordered. Collagen-like domains lie at 527–584 (GPPG…GADG) and 567–623 (PPGP…GPPG). Residues 528 to 1540 (PPGPMGLTGR…PGPPGPPGEV (1013 aa)) are triple-helical region. Gly residues-rich tracts occupy residues 539–548 (GPVGGPGSAG) and 581–590 (GADGGRGMPG). The residue at position 610 (K610) is an Allysine. Residues 639 to 655 (PRGLPGEAGPRGLLGPR) are compositionally biased toward low complexity. Pro residues predominate over residues 697-708 (QGLPGPQGPIGP). Residues 715-726 (QGKPGLAGLPGA) show a composition bias toward low complexity. Positions 728–781 (GPPGHPGKEGQSGEKGALGPPGPQGPIGYPGPRGVKGADGVRGLKGSKGEKGED) constitute a Collagen-like 4 domain. Residues 805–814 (RGEDGPEGPK) show a composition bias toward basic and acidic residues. 3 stretches are compositionally biased toward low complexity: residues 873–901 (KPGP…PGPK), 916–925 (RGPQGPQGPV), and 969–979 (PQGPTGETGPI). Over residues 1040 to 1049 (GLKGGEGPQG) the composition is skewed to gly residues. Residues 1074–1083 (RPGPQGPPGP) show a composition bias toward pro residues. A compositionally biased stretch (low complexity) spans 1084–1108 (AGEKGAPGEKGPQGPAGRDGVQGPV). The span at 1160 to 1169 (GIAGGDGEPG) shows a compositional bias: gly residues. Positions 1216–1227 (MGPPGPPGPRGP) are enriched in pro residues. Composition is skewed to low complexity over residues 1240–1249 (PGSIGSVGVV) and 1282–1296 (AGPP…IKGP). Positions 1341–1360 (QPGPPGPSGEAGPPGPPGKR) are enriched in pro residues. Low complexity-rich tracts occupy residues 1383–1392 (AEGPPGKTGP) and 1417–1426 (QGLPGAAGQD). 2 consecutive Collagen-like domains span residues 1427–1482 (GPPG…SPGA) and 1481–1539 (GAKG…PPGE). Over residues 1428-1437 (PPGPLGPPGL) the composition is skewed to pro residues. Residue K1450 is modified to Allysine. Over residues 1453–1462 (PGLIGLIGPP) the composition is skewed to low complexity. The segment covering 1481 to 1490 (GAKGDGGIPG) has biased composition (gly residues). Residues 1491–1507 (PAGPIGPPGPPGLPGPA) show a composition bias toward pro residues. Positions 1509–1519 (PKGNKGSSGPT) are enriched in low complexity. A compositionally biased stretch (pro residues) spans 1528 to 1537 (PGPPGPPGPP). Positions 1541–1561 (IQPLPILSPKKTRRHTESIQG) are nonhelical region (C-terminal). The propeptide at 1562–1804 (DAGDNILDYS…FEVGPACFLG (243 aa)) is C-terminal propeptide. One can recognise a Fibrillar collagen NC1 domain in the interval 1575 to 1803 (EEIFGSLNSL…GFEVGPACFL (229 aa)). C1605 and C1637 are oxidised to a cystine. Ca(2+)-binding residues include D1623, N1625, Q1626, C1628, and D1631. N1638 carries N-linked (GlcNAc...) asparagine glycosylation. 2 disulfides stabilise this stretch: C1646–C1801 and C1712–C1755.

The protein belongs to the fibrillar collagen family. In terms of assembly, trimers composed of three different chains: alpha 1(XI), alpha 2(XI), and alpha 3(XI). Alpha 3(XI) is a post-translational modification of alpha 1(II). Alpha 1(V) can also be found instead of alpha 3(XI)=1(II). Prolines at the third position of the tripeptide repeating unit (G-X-Y) are hydroxylated in some or all of the chains. Post-translationally, N-glycosylated.

The protein localises to the secreted. It is found in the extracellular space. It localises to the extracellular matrix. May play an important role in fibrillogenesis by controlling lateral growth of collagen II fibrils. The chain is Collagen alpha-1(XI) chain (Col11a1) from Mus musculus (Mouse).